The primary structure comprises 467 residues: Rhamnulokinase (467 aa).

11 to 15 is an ATP binding site; the sequence is ASSGR. Residues alanine 78 and 235-237 each bind substrate; that span reads HDT. The Proton acceptor role is filled by aspartate 236. Threonine 257 is a binding site for ATP. Asparagine 294 lines the substrate pocket. Glutamine 302 serves as a coordination point for ATP. The cysteines at positions 351 and 368 are disulfide-linked. Residue glycine 400 participates in ATP binding.

It belongs to the rhamnulokinase family. It depends on Mg(2+) as a cofactor.

It catalyses the reaction L-rhamnulose + ATP = L-rhamnulose 1-phosphate + ADP + H(+). The protein operates within carbohydrate degradation; L-rhamnose degradation; glycerone phosphate from L-rhamnose: step 2/3. Its function is as follows. Involved in the catabolism of L-rhamnose (6-deoxy-L-mannose). Catalyzes the transfer of the gamma-phosphate group from ATP to the 1-hydroxyl group of L-rhamnulose to yield L-rhamnulose 1-phosphate. The sequence is that of Rhamnulokinase from Halalkalibacterium halodurans (strain ATCC BAA-125 / DSM 18197 / FERM 7344 / JCM 9153 / C-125) (Bacillus halodurans).